The following is a 421-amino-acid chain: ATP-dependent RNA helicase RhlB (421 aa).

The Q motif motif lies at 9-37; the sequence is QKFSDFALHPKVVEALEKKGFHNCTPIQA. Positions 40 to 219 constitute a Helicase ATP-binding domain; the sequence is LPLTLAGRDV…FEQMNNAEYI (180 aa). 53–60 contacts ATP; the sequence is AQTGTGKT. The DEAD box signature appears at 165 to 168; the sequence is DEAD. Positions 245 to 390 constitute a Helicase C-terminal domain; sequence RLLQTLIEEE…VSKYNPDALM (146 aa). The segment at 392–421 is disordered; it reads DLPKPLRLTRPRTGNGPRRTGAPRNRRRSG. The span at 402 to 414 shows a compositional bias: low complexity; sequence PRTGNGPRRTGAP.

It belongs to the DEAD box helicase family. RhlB subfamily. As to quaternary structure, component of the RNA degradosome, which is a multiprotein complex involved in RNA processing and mRNA degradation.

Its subcellular location is the cytoplasm. The catalysed reaction is ATP + H2O = ADP + phosphate + H(+). Functionally, DEAD-box RNA helicase involved in RNA degradation. Has RNA-dependent ATPase activity and unwinds double-stranded RNA. This chain is ATP-dependent RNA helicase RhlB, found in Escherichia fergusonii (strain ATCC 35469 / DSM 13698 / CCUG 18766 / IAM 14443 / JCM 21226 / LMG 7866 / NBRC 102419 / NCTC 12128 / CDC 0568-73).